A 414-amino-acid chain; its full sequence is Probable isoprenylcysteine alpha-carbonyl methylesterase ICME (414 aa).

The segment at 1 to 54 (MQPASPVSGDAGPVAEAVPPRGAPQVLVRRRSVPFSPDSPLAPGSRGGGERRST) is disordered. 2 helical membrane-spanning segments follow: residues 90-110 (LAALIIYAILLMPGFIRVGYY) and 145-165 (VVAFVTGGAWIIGYKAWGALL). Residues 151 to 153 (GGA) and 222 to 224 (QSA) contribute to the substrate site. Catalysis depends on residues Ser-223, Asp-323, and His-355.

This sequence belongs to the AB hydrolase superfamily. Isoprenylcysteine methylesterase family.

Its subcellular location is the endoplasmic reticulum membrane. It localises to the golgi apparatus membrane. The enzyme catalyses [protein]-C-terminal S-[(2E,6E)-farnesyl]-L-cysteine methyl ester + H2O = [protein]-C-terminal S-[(2E,6E)-farnesyl]-L-cysteine + methanol + H(+). Its function is as follows. Catalyzes the demethylation of isoprenylcysteine methylesters. This is Probable isoprenylcysteine alpha-carbonyl methylesterase ICME (IMCE) from Oryza sativa subsp. japonica (Rice).